A 75-amino-acid polypeptide reads, in one-letter code: Putative antitoxin VapB29 (75 aa).

Possibly the antitoxic component of a type II toxin-antitoxin (TA) system. Its cognate toxin is VapC29 (Potential). The polypeptide is Putative antitoxin VapB29 (vapB29) (Mycobacterium tuberculosis (strain CDC 1551 / Oshkosh)).